The chain runs to 413 residues: Intracellular hyaluronan-binding protein 4 (413 aa).

2 positions are modified to phosphoserine: Ser7 and Ser36. Residues 40–64 (DILREAERRRQQQLQRKRRDEAAAA) adopt a coiled-coil conformation. A disordered region spans residues 42–206 (LREAERRRQQ…RGGPGNRVFD (165 aa)). Positions 62 to 82 (AAAAGAGPRGGRSPAGASGHR) are enriched in low complexity. At Arg70 the chain carries Omega-N-methylarginine. Ser74 carries the phosphoserine modification. Positions 87–97 (GRRESQKERKS) are enriched in basic and acidic residues. Residue Ser108 is modified to Phosphoserine. Residues 139–182 (MLERAERRSYREYRPYETERQADFTAEKFPDEKPGDRFDRDRPL) are compositionally biased toward basic and acidic residues. Residues 184 to 201 (GRGGPRGGMRGRGRGGPG) show a composition bias toward gly residues. Glycyl lysine isopeptide (Lys-Gly) (interchain with G-Cter in SUMO1); alternate cross-links involve residues Lys213 and Lys276. Glycyl lysine isopeptide (Lys-Gly) (interchain with G-Cter in SUMO2); alternate cross-links involve residues Lys213 and Lys276. A disordered region spans residues 227-320 (VRTEDNMGGC…IRKPESTVPS (94 aa)). Basic and acidic residues predominate over residues 294–315 (DEWKNLQEQTRPKPEFNIRKPE). Lys336 is covalently cross-linked (Glycyl lysine isopeptide (Lys-Gly) (interchain with G-Cter in SUMO1); alternate). Residue Lys336 forms a Glycyl lysine isopeptide (Lys-Gly) (interchain with G-Cter in SUMO2); alternate linkage. Phosphothreonine; by PKC occurs at positions 354 and 375. Residues 360–413 (NFGNLPRPGRGARGGTRGGRGRIRRAENYGPRAEVVMQDVAPNPDDPEDFPALS) are disordered. Over residues 404-413 (DDPEDFPALS) the composition is skewed to acidic residues.

Belongs to the SERBP1-HABP4 family. As to quaternary structure, associates with ribosomes; promoting ribosome stabilization. Interacts with EEF2/eEF2; promoting ribosome stabilization. Interacts with FMR1. Interacts with FXR1 and FXR2. Interacts with CHD3 (via C-terminus). Interacts (via C-terminus) with RACK1. Interacts with p53/TP53. Interacts (via N-terminus) with SRSF9; this interaction is direct. Interacts with SYNCRIP; this interaction is direct. Interacts with MEF2C (via N-terminus); this interaction decreases DNA-binding activity of MEF2C in myocardial cells in response to mechanical stress. Interacts with PRMT1 (via N-terminus). Interacts with SPIN1. Post-translationally, methylated. Methylation is decreased by phorbol 12-myristate 13-acetate (PMA)-activated PKC, in vitro. In terms of processing, phosphorylated by phorbol 12-myristate 13-acetate (PMA)-activated PKC isoforms at Thr-354 and Thr-375. Highly expressed in brain, heart, and kidney, and moderately expressed in skeletal muscle. Also expressed in a variety of tumor cell lines and in activated but not resting leukocytes.

The protein localises to the nucleus. The protein resides in the cytoplasm. It is found in the stress granule. It localises to the sarcoplasm. Its subcellular location is the nuclear body. The protein localises to the nucleolus. The protein resides in the nucleus speckle. It is found in the cajal body. It localises to the gem. Its function is as follows. Ribosome-binding protein that promotes ribosome hibernation, a process during which ribosomes are stabilized in an inactive state and preserved from proteasomal degradation. Acts via its association with EEF2/eEF2 factor at the A-site of the ribosome, promoting ribosome stabilization in an inactive state compatible with storage. Plays a key role in ribosome hibernation in the mature oocyte by promoting ribosome stabilization. Ribosomes, which are produced in large quantities during oogenesis, are stored and translationally repressed in the oocyte and early embryo. Also binds RNA, regulating transcription and pre-mRNA splicing. Binds (via C-terminus) to poly(U) RNA. Seems to play a role in PML-nuclear bodies formation. Negatively regulates DNA-binding activity of the transcription factor MEF2C in myocardial cells in response to mechanical stress. The polypeptide is Intracellular hyaluronan-binding protein 4 (Homo sapiens (Human)).